The following is a 122-amino-acid chain: Large-conductance mechanosensitive channel (122 aa).

2 consecutive transmembrane segments (helical) span residues 29 to 49 and 66 to 86; these read FGKI…GLIF and GVFI…FLFI.

Belongs to the MscL family. In terms of assembly, homopentamer.

The protein localises to the cell membrane. In terms of biological role, channel that opens in response to stretch forces in the membrane lipid bilayer. May participate in the regulation of osmotic pressure changes within the cell. This chain is Large-conductance mechanosensitive channel, found in Macrococcus caseolyticus (strain JCSC5402) (Macrococcoides caseolyticum).